The following is a 67-amino-acid chain: Conotoxin Cp1.1 (67 aa).

Positions 1–26 are cleaved as a signal peptide; that stretch reads MMFRLTSVSCFLLVIACLNLFQVVLT. 4 disulfide bridges follow: C29-C43, C36-C48, C42-C52, and C47-C56. Residue Y60 is modified to Tyrosine amide. A propeptide spanning residues 64 to 67 is cleaved from the precursor; sequence ATFQ.

This sequence belongs to the conotoxin I2 superfamily. Expressed by the venom duct.

The protein localises to the secreted. This is Conotoxin Cp1.1 from Conus capitaneus (Captain cone).